Here is a 142-residue protein sequence, read N- to C-terminus: Large ribosomal subunit protein uL13 (142 aa).

It belongs to the universal ribosomal protein uL13 family. Part of the 50S ribosomal subunit.

Functionally, this protein is one of the early assembly proteins of the 50S ribosomal subunit, although it is not seen to bind rRNA by itself. It is important during the early stages of 50S assembly. The chain is Large ribosomal subunit protein uL13 from Serratia proteamaculans (strain 568).